A 335-amino-acid polypeptide reads, in one-letter code: Beta-ketoacyl-[acyl-carrier-protein] synthase III (335 aa).

Catalysis depends on residues cysteine 119 and histidine 261. The ACP-binding stretch occupies residues 262 to 266 (QANQR). Asparagine 291 is an active-site residue.

Belongs to the thiolase-like superfamily. FabH family. As to quaternary structure, homodimer.

It localises to the cytoplasm. The enzyme catalyses malonyl-[ACP] + acetyl-CoA + H(+) = 3-oxobutanoyl-[ACP] + CO2 + CoA. It participates in lipid metabolism; fatty acid biosynthesis. Catalyzes the condensation reaction of fatty acid synthesis by the addition to an acyl acceptor of two carbons from malonyl-ACP. Catalyzes the first condensation reaction which initiates fatty acid synthesis and may therefore play a role in governing the total rate of fatty acid production. Possesses both acetoacetyl-ACP synthase and acetyl transacylase activities. Its substrate specificity determines the biosynthesis of branched-chain and/or straight-chain of fatty acids. The sequence is that of Beta-ketoacyl-[acyl-carrier-protein] synthase III from Prochlorococcus marinus (strain MIT 9515).